Reading from the N-terminus, the 599-residue chain is Serine hydroxymethyltransferase 6 (599 aa).

Positions 1-25 (MDRIAQSDLSLGFGSSHALPLPHPP) are disordered. Lys-374 bears the N6-(pyridoxal phosphate)lysine mark.

The protein belongs to the SHMT family. As to quaternary structure, homotetramer. Pyridoxal 5'-phosphate serves as cofactor.

Its subcellular location is the cytoplasm. It carries out the reaction (6R)-5,10-methylene-5,6,7,8-tetrahydrofolate + glycine + H2O = (6S)-5,6,7,8-tetrahydrofolate + L-serine. Its pathway is one-carbon metabolism; tetrahydrofolate interconversion. Functionally, catalyzes the interconversion of serine and glycine. The sequence is that of Serine hydroxymethyltransferase 6 (SHM6) from Arabidopsis thaliana (Mouse-ear cress).